A 125-amino-acid polypeptide reads, in one-letter code: Large ribosomal subunit protein bL12 (125 aa).

This sequence belongs to the bacterial ribosomal protein bL12 family. Homodimer. Part of the ribosomal stalk of the 50S ribosomal subunit. Forms a multimeric L10(L12)X complex, where L10 forms an elongated spine to which 2 to 4 L12 dimers bind in a sequential fashion. Binds GTP-bound translation factors.

Its function is as follows. Forms part of the ribosomal stalk which helps the ribosome interact with GTP-bound translation factors. Is thus essential for accurate translation. The chain is Large ribosomal subunit protein bL12 from Rickettsia typhi (strain ATCC VR-144 / Wilmington).